The following is a 340-amino-acid chain: UDP-3-O-acylglucosamine N-acyltransferase (340 aa).

The active-site Proton acceptor is H237.

Belongs to the transferase hexapeptide repeat family. LpxD subfamily. As to quaternary structure, homotrimer.

It carries out the reaction a UDP-3-O-[(3R)-3-hydroxyacyl]-alpha-D-glucosamine + a (3R)-hydroxyacyl-[ACP] = a UDP-2-N,3-O-bis[(3R)-3-hydroxyacyl]-alpha-D-glucosamine + holo-[ACP] + H(+). Its pathway is bacterial outer membrane biogenesis; LPS lipid A biosynthesis. Functionally, catalyzes the N-acylation of UDP-3-O-acylglucosamine using 3-hydroxyacyl-ACP as the acyl donor. Is involved in the biosynthesis of lipid A, a phosphorylated glycolipid that anchors the lipopolysaccharide to the outer membrane of the cell. This Desulfosudis oleivorans (strain DSM 6200 / JCM 39069 / Hxd3) (Desulfococcus oleovorans) protein is UDP-3-O-acylglucosamine N-acyltransferase.